We begin with the raw amino-acid sequence, 189 residues long: Receptor activity-modifying protein 2 (189 aa).

An N-terminal signal peptide occupies residues 1-44 (MAPLRVERAPGGSRLGVTRAQRPTALCLPPLLLLLLLLLGAVSA). Residues 45 to 157 (SPESLNQSLP…VQPTFSDPPE (113 aa)) are Extracellular-facing. The segment covering 49–61 (LNQSLPESQNQSH) has biased composition (polar residues). Positions 49–69 (LNQSLPESQNQSHPTEDSLVS) are disordered. Residues N50, N58, N99, and N144 are each glycosylated (N-linked (GlcNAc...) asparagine). 2 disulfide bridges follow: C83/C113 and C98/C145. Residues 158–179 (DVLLAMIIAPICLIPFLVTLVV) form a helical membrane-spanning segment. Topologically, residues 180–189 (WRSKDSDAQA) are cytoplasmic.

The protein belongs to the RAMP family. Heterodimer of CALCRL and RAMP2; the interaction forms the receptor complex for adrenomedullin/ADM. Heterodimer of CALCR and RAMP2; interaction forms the AMYR2 receptor complex for calcitonin/CALC and amylin/IAPP. As to expression, ubiquitous. Expressed predominantly in embryonic brain, lung and gut and in adult heart, lung, skeletal muscle and brain.

The protein localises to the cell membrane. Accessory protein that interacts with and modulates the function of G-protein coupled receptors including calcitonin gene-related peptide type 1 receptor (CALCRL) and calcitonin receptor (CALCR). Required for the transport of CALCRL to the plasma membrane. Together with CALCRL, form a receptor complex for adrenomedullin/ADM. Together with CALCR, act as a receptor complex for calcitonin/CT/CALC. Together with CALCR, also act as a receptor complex for amylin/IAPP. This chain is Receptor activity-modifying protein 2, found in Mus musculus (Mouse).